The primary structure comprises 277 residues: Large ribosomal subunit protein uL2 (277 aa).

Residues 227-277 are disordered; it reads VMNPVDHPHGGGEGRTSGGRHPVTPWGVPTKGKKTRSKTKASDRLIMRRRK. Over residues 266-277 the composition is skewed to basic and acidic residues; that stretch reads KASDRLIMRRRK.

Belongs to the universal ribosomal protein uL2 family. Part of the 50S ribosomal subunit. Forms a bridge to the 30S subunit in the 70S ribosome.

Functionally, one of the primary rRNA binding proteins. Required for association of the 30S and 50S subunits to form the 70S ribosome, for tRNA binding and peptide bond formation. It has been suggested to have peptidyltransferase activity; this is somewhat controversial. Makes several contacts with the 16S rRNA in the 70S ribosome. The protein is Large ribosomal subunit protein uL2 of Magnetococcus marinus (strain ATCC BAA-1437 / JCM 17883 / MC-1).